Here is a 570-residue protein sequence, read N- to C-terminus: Adenine deaminase (570 aa).

Belongs to the metallo-dependent hydrolases superfamily. Adenine deaminase family. It depends on Mn(2+) as a cofactor.

The enzyme catalyses adenine + H2O + H(+) = hypoxanthine + NH4(+). The protein is Adenine deaminase of Clostridium acetobutylicum (strain ATCC 824 / DSM 792 / JCM 1419 / IAM 19013 / LMG 5710 / NBRC 13948 / NRRL B-527 / VKM B-1787 / 2291 / W).